A 319-amino-acid chain; its full sequence is uncharacterized protein (319 aa).

Residues 29-164 (VNISSLALLK…LDAFRSVNPL (136 aa)) enclose the MPN domain. Zn(2+) contacts are provided by H111, H113, and D124. The short motif at 111-124 (HSHPGFGCWLSSVD) is the JAMM motif element.

It belongs to the peptidase M67A family.

This is an uncharacterized protein from Caenorhabditis elegans.